A 390-amino-acid chain; its full sequence is 5-hydroxytryptamine receptor 1B (390 aa).

The tract at residues 1-21 (MEETGAQCAPPPPAGSQTGVS) is disordered. The Extracellular portion of the chain corresponds to 1–46 (MEETGAQCAPPPPAGSQTGVSQVNLSAAPSHNCSTEGYVYQDSVAL). Residues Asn24 and Asn32 are each glycosylated (N-linked (GlcNAc...) asparagine). A helical transmembrane segment spans residues 47 to 72 (PWKVLLVVLLALITLATTLSNAFVIA). Residues 73–86 (TVYRTRKLHTPANY) are Cytoplasmic-facing. Residues 87–111 (LIASLAVTDLLVSILVMPISTMYVV) form a helical membrane-spanning segment. Residues 112–119 (TGRWTLGQ) are Extracellular-facing. The helical transmembrane segment at 120–145 (VVCDFWLSSDITCCTASILHLCVIAL) threads the bilayer. Cysteines 122 and 199 form a disulfide. Ergotamine contacts are provided by Asp129 and Thr134. The short motif at 146-148 (DRY) is the DRY motif; important for ligand-induced conformation changes and signaling element. The Cytoplasmic segment spans residues 146–165 (DRYWAITDAVEYSAKRTPKR). A helical membrane pass occupies residues 166–184 (AAVMIALVWVFSISISLPP). Topologically, residues 185 to 205 (FFWRQAKAEEEVLDCLVNTDH) are extracellular. Val201 is an ergotamine binding site. Residues 206 to 229 (ILYTVYSTVGAFYFPTLLLIALYS) traverse the membrane as a helical segment. Residues 230 to 315 (RIYVEARSRI…AARERKATKT (86 aa)) are Cytoplasmic-facing. The disordered stretch occupies residues 251–282 (LTRAQLMTDSPGSTSSVTSINSRAPDVPSESG). Over residues 255-272 (QLMTDSPGSTSSVTSINS) the composition is skewed to polar residues. Residues 316 to 337 (LGIILGAFIVCWLPFFIISLVM) traverse the membrane as a helical segment. Over 338 to 347 (PICKDACWFH) the chain is Extracellular. A helical membrane pass occupies residues 348-370 (LAIFDFFTWLGYLNSLINPIIYT). The NPxxY motif; important for ligand-induced conformation changes and signaling motif lies at 365 to 369 (NPIIY). Topologically, residues 371-390 (MSNEDFKQAFHKLIRFKCAS) are cytoplasmic. Cys388 carries S-palmitoyl cysteine lipidation.

This sequence belongs to the G-protein coupled receptor 1 family. As to quaternary structure, homodimer. Heterodimer with HTR1D. Post-translationally, phosphorylated. Desensitization of the receptor may be mediated by its phosphorylation. In terms of processing, palmitoylated.

The protein resides in the cell membrane. In terms of biological role, G-protein coupled receptor for 5-hydroxytryptamine (serotonin). Also functions as a receptor for ergot alkaloid derivatives, various anxiolytic and antidepressant drugs and other psychoactive substances, such as lysergic acid diethylamide (LSD). Ligand binding causes a conformation change that triggers signaling via guanine nucleotide-binding proteins (G proteins) and modulates the activity of downstream effectors, such as adenylate cyclase. HTR1B is coupled to G(i)/G(o) G alpha proteins and mediates inhibitory neurotransmission by inhibiting adenylate cyclase activity. Arrestin family members inhibit signaling via G proteins and mediate activation of alternative signaling pathways. Regulates the release of 5-hydroxytryptamine, dopamine and acetylcholine in the brain, and thereby affects neural activity, nociceptive processing, pain perception, mood and behavior. Besides, plays a role in vasoconstriction of cerebral arteries. This Equus caballus (Horse) protein is 5-hydroxytryptamine receptor 1B (HTR1B).